We begin with the raw amino-acid sequence, 706 residues long: Glycylpeptide N-tetradecanoyltransferase (706 aa).

A disordered region spans residues 1–119 (MSGIAGTSQD…LASGSSREGK (119 aa)). Residues 7 to 42 (TSQDTSVAASASSSSTRPAAASSSIAPPSPSLTTAP) are compositionally biased toward low complexity. Residues 47-65 (EQDDDDDQENDDEEEEEEG) show a composition bias toward acidic residues. The span at 78–95 (KQRKKKKSKAAAKLRKKL) shows a compositional bias: basic residues. Tetradecanoyl-CoA is bound by residues 180 to 183 (HKFW), 317 to 319 (LCV), and 325 to 329 (SKRLA). Val706 serves as the catalytic Proton acceptor; via carboxylate.

This sequence belongs to the NMT family. In terms of assembly, monomer.

The protein resides in the cytoplasm. It catalyses the reaction N-terminal glycyl-[protein] + tetradecanoyl-CoA = N-tetradecanoylglycyl-[protein] + CoA + H(+). Functionally, adds a myristoyl group to the N-terminal glycine residue of certain cellular proteins. This Mycosarcoma maydis (Corn smut fungus) protein is Glycylpeptide N-tetradecanoyltransferase (NMT1).